Consider the following 711-residue polypeptide: F-box only protein 34 (711 aa).

Disordered stretches follow at residues 1–36, 249–271, 337–372, and 494–529; these read MHLK…VNDE, SESY…EVGE, DTQV…ASQD, and YSQL…GSAE. A compositionally biased stretch (basic and acidic residues) spans 10–23; it reads QKKEHPPEVSRETQ. Basic and acidic residues predominate over residues 354–364; sequence RADRCSPKEDQ. The 53-residue stretch at 572 to 624 folds into the F-box domain; it reads QQYMAFLPHHIMVKIFRLLPTKSLVALKCTCCYFKFIIEYYNIRPADSRWVRD.

In terms of assembly, directly interacts with SKP1 and CUL1.

Functionally, substrate-recognition component of the SCF (SKP1-CUL1-F-box protein)-type E3 ubiquitin ligase complex. This is F-box only protein 34 (FBXO34) from Homo sapiens (Human).